Here is a 282-residue protein sequence, read N- to C-terminus: Casein kinase II subunit beta-2 (282 aa).

Residues 1 to 92 (MYRERGMVGS…ESEVSGSDGE (92 aa)) are disordered. A compositionally biased stretch (basic and acidic residues) spans 13 to 28 (EVVDRKRINEIHDNRP). Polar residues-rich tracts occupy residues 29-47 (SHSM…STSV) and 61-71 (RSGSISKTNIS). Acidic residues predominate over residues 75-92 (DISDTDSEESEVSGSDGE).

Belongs to the casein kinase 2 subunit beta family. Heterotetramer of two catalytic alpha subunits and two regulatory beta subunits. Interacts with CCA1. Phosphorylated by alpha subunit.

Its subcellular location is the cytoplasm. The protein localises to the cytosol. The protein resides in the nucleus. In terms of biological role, plays a complex role in regulating the basal catalytic activity of the alpha subunit. The tetrameric holoenzyme CK2, composed of two alpha and two beta subunits, phosphorylates the transcription factor PIF1 after an exposure to light, resulting in a proteasome-dependent degradation of PIF1 and promotion of photomorphogenesis. CK2 phosphorylates translation initiation factors. May participate in the regulation of the initiation of translation. The protein is Casein kinase II subunit beta-2 (CKB2) of Arabidopsis thaliana (Mouse-ear cress).